The sequence spans 888 residues: Extra-large guanine nucleotide-binding protein 1 (888 aa).

The tract at residues 98-119 (SVIEHTEEEEEEEGGDGEDCEL) is disordered. The span at 103–118 (TEEEEEEEGGDGEDCE) shows a compositional bias: acidic residues. Residues 205-222 (RRVRVVPVKKQPQTKGKK) carry the Nuclear localization signal motif. An RING-type; degenerate zinc finger spans residues 225-268 (CYRCFKGSRFTEKEVCLVCDAKYCNSCVLRAMGSMPEGRKCVTC). One can recognise a G-alpha domain in the interval 482-879 (TLQKILLVGN…NICMSEYSMY (398 aa)). The G1 motif stretch occupies residues 485–498 (KILLVGNSGSGTST). Residues 490–498 (GNSGSGTST) and 661–669 (DILYAEGVT) contribute to the GTP site. Residues Ser497 and Thr669 each coordinate Ca(2+). The segment at 661–669 (DILYAEGVT) is G2 motif. The tract at residues 702–711 (YQLIRVPSRG) is G3 motif. Residues 770 to 777 (LLILNKYD) are G4 motif. GTP is bound at residue 774-777 (NKYD). Residues 843–848 (SKSLDP) form a G5 motif region.

The protein belongs to the G-alpha family. XLG subfamily. The cofactor is Ca(2+). In terms of tissue distribution, ubiquitous. Strongly expressed in vascular tissues, root and shoot meristems and lateral root primordia.

The protein localises to the nucleus. In terms of biological role, guanine nucleotide-binding proteins (G proteins) are involved as modulators or transducers in various transmembrane signaling systems. Binds GTP with specificity. Plays a role in the root morphogenesis by regulation of the cell proliferation. The protein is Extra-large guanine nucleotide-binding protein 1 (XLG1) of Arabidopsis thaliana (Mouse-ear cress).